The chain runs to 124 residues: MNHPSELKYARTHEWVKIEGDLVITGITDHAQDELGDLVYVETPEVGSQVTAGEQARVVESVKTASDIHAPVSGTVVEVNTDLEDDPDFVNEDPYGKGWIYKIKPDNIADVEKLLTNAEYEAGL.

A Lipoyl-binding domain is found at Leu-22–Lys-104. Lys-63 is subject to N6-lipoyllysine.

Belongs to the GcvH family. As to quaternary structure, the glycine cleavage system is composed of four proteins: P, T, L and H. (R)-lipoate is required as a cofactor.

The glycine cleavage system catalyzes the degradation of glycine. The H protein shuttles the methylamine group of glycine from the P protein to the T protein. The sequence is that of Glycine cleavage system H protein from Acinetobacter baumannii (strain SDF).